Reading from the N-terminus, the 239-residue chain is Geranylgeranylglyceryl phosphate synthase (239 aa).

Mg(2+) contacts are provided by Asp19 and Ser48. Residues 167-173 (YLEAGSG), 197-198 (GG), and 219-220 (GT) each bind sn-glycerol 1-phosphate.

It belongs to the GGGP/HepGP synthase family. Group II subfamily. The cofactor is Mg(2+).

Its subcellular location is the cytoplasm. The enzyme catalyses sn-glycerol 1-phosphate + (2E,6E,10E)-geranylgeranyl diphosphate = sn-3-O-(geranylgeranyl)glycerol 1-phosphate + diphosphate. It functions in the pathway membrane lipid metabolism; glycerophospholipid metabolism. In terms of biological role, prenyltransferase that catalyzes the transfer of the geranylgeranyl moiety of geranylgeranyl diphosphate (GGPP) to the C3 hydroxyl of sn-glycerol-1-phosphate (G1P). This reaction is the first ether-bond-formation step in the biosynthesis of archaeal membrane lipids. This chain is Geranylgeranylglyceryl phosphate synthase, found in Methanopyrus kandleri (strain AV19 / DSM 6324 / JCM 9639 / NBRC 100938).